The sequence spans 810 residues: Phospholipase D alpha 1 (810 aa).

A propeptide spanning residues 1-36 (MAQHLLHGTLHATIYEVDDLHTGGLRSGFFGKILAN) is cleaved from the precursor. The 126-residue stretch at 1–126 (MAQHLLHGTL…IHGEEVDQWV (126 aa)) folds into the C2 domain. Asp187 contacts Ca(2+). Residues 327–366 (AMFTHHQKIVVVDSEMPSRGGSQMRRIVSFVGGIDLCDGR) enclose the PLD phosphodiesterase 1 domain. Active-site residues include His332, Lys334, and Asp339. His332 contacts a 1,2-diacyl-sn-glycero-3-phosphate. 2 residues coordinate Ca(2+): His372 and His406. Positions 522 and 661 each coordinate a 1,2-diacyl-sn-glycero-3-phosphate. The region spanning 656–683 (FMIYVHTKMMIVDDEYIIIGSANINQRS) is the PLD phosphodiesterase 2 domain. Active-site residues include His661, Lys663, and Asp668. Glu722 is a binding site for Ca(2+).

The protein belongs to the phospholipase D family. C2-PLD subfamily. Ca(2+) is required as a cofactor.

It localises to the cytoplasm. The protein localises to the membrane. It carries out the reaction a 1,2-diacyl-sn-glycero-3-phosphocholine + H2O = a 1,2-diacyl-sn-glycero-3-phosphate + choline + H(+). Its function is as follows. Hydrolyzes glycerol-phospholipids at the terminal phosphodiesteric bond. Plays an important role in various cellular processes, including phytohormone action, vesicular trafficking, secretion, cytoskeletal arrangement, meiosis, tumor promotion, pathogenesis, membrane deterioration and senescence. This is Phospholipase D alpha 1 (PLD1) from Brassica oleracea var. capitata (Cabbage).